The primary structure comprises 217 residues: Imidazole glycerol phosphate synthase subunit HisH (217 aa).

The Glutamine amidotransferase type-1 domain occupies 1 to 212; that stretch reads MLAILDYKAG…YEYCRQSRQE (212 aa). Catalysis depends on cysteine 79, which acts as the Nucleophile. Catalysis depends on residues histidine 187 and glutamate 189.

Heterodimer of HisH and HisF.

Its subcellular location is the cytoplasm. It carries out the reaction 5-[(5-phospho-1-deoxy-D-ribulos-1-ylimino)methylamino]-1-(5-phospho-beta-D-ribosyl)imidazole-4-carboxamide + L-glutamine = D-erythro-1-(imidazol-4-yl)glycerol 3-phosphate + 5-amino-1-(5-phospho-beta-D-ribosyl)imidazole-4-carboxamide + L-glutamate + H(+). The enzyme catalyses L-glutamine + H2O = L-glutamate + NH4(+). It functions in the pathway amino-acid biosynthesis; L-histidine biosynthesis; L-histidine from 5-phospho-alpha-D-ribose 1-diphosphate: step 5/9. Functionally, IGPS catalyzes the conversion of PRFAR and glutamine to IGP, AICAR and glutamate. The HisH subunit catalyzes the hydrolysis of glutamine to glutamate and ammonia as part of the synthesis of IGP and AICAR. The resulting ammonia molecule is channeled to the active site of HisF. The polypeptide is Imidazole glycerol phosphate synthase subunit HisH (Desulfovibrio desulfuricans (strain ATCC 27774 / DSM 6949 / MB)).